The following is a 179-amino-acid chain: Acireductone dioxygenase (179 aa).

4 residues coordinate Fe(2+): histidine 85, histidine 87, glutamate 91, and histidine 132. Residues histidine 85, histidine 87, glutamate 91, and histidine 132 each coordinate Ni(2+).

Belongs to the acireductone dioxygenase (ARD) family. Fe(2+) is required as a cofactor. Requires Ni(2+) as cofactor.

It is found in the cytoplasm. The protein localises to the nucleus. The catalysed reaction is 1,2-dihydroxy-5-(methylsulfanyl)pent-1-en-3-one + O2 = 4-methylsulfanyl-2-oxobutanoate + formate + 2 H(+). It catalyses the reaction 1,2-dihydroxy-5-(methylsulfanyl)pent-1-en-3-one + O2 = 3-(methylsulfanyl)propanoate + CO + formate + 2 H(+). It participates in amino-acid biosynthesis; L-methionine biosynthesis via salvage pathway; L-methionine from S-methyl-5-thio-alpha-D-ribose 1-phosphate: step 5/6. Its function is as follows. Catalyzes 2 different reactions between oxygen and the acireductone 1,2-dihydroxy-3-keto-5-methylthiopentene (DHK-MTPene) depending upon the metal bound in the active site. Fe-containing acireductone dioxygenase (Fe-ARD) produces formate and 2-keto-4-methylthiobutyrate (KMTB), the alpha-ketoacid precursor of methionine in the methionine recycle pathway. Ni-containing acireductone dioxygenase (Ni-ARD) produces methylthiopropionate, carbon monoxide and formate, and does not lie on the methionine recycle pathway. This Saccharomyces cerevisiae (strain ATCC 204508 / S288c) (Baker's yeast) protein is Acireductone dioxygenase.